The chain runs to 203 residues: Ribosome-binding factor A (203 aa).

Over residues 119-141 (LAEVRRDARPAGDEDPYRRPRTV) the composition is skewed to basic and acidic residues. The tract at residues 119–203 (LAEVRRDARP…SPGGDPTAGR (85 aa)) is disordered. The segment covering 142-169 (DEDDEDEDEDLVDEFDEFDRVEELDADA) has biased composition (acidic residues).

It belongs to the RbfA family. Monomer. Binds 30S ribosomal subunits, but not 50S ribosomal subunits or 70S ribosomes.

Its subcellular location is the cytoplasm. In terms of biological role, one of several proteins that assist in the late maturation steps of the functional core of the 30S ribosomal subunit. Associates with free 30S ribosomal subunits (but not with 30S subunits that are part of 70S ribosomes or polysomes). Required for efficient processing of 16S rRNA. May interact with the 5'-terminal helix region of 16S rRNA. The polypeptide is Ribosome-binding factor A (Frankia alni (strain DSM 45986 / CECT 9034 / ACN14a)).